Here is a 281-residue protein sequence, read N- to C-terminus: Nucleotide-binding protein PSHAa2554 (281 aa).

ATP is bound at residue 8–15 (GRSGSGKS). 56–59 (DVRN) contributes to the GTP binding site.

The protein belongs to the RapZ-like family.

Displays ATPase and GTPase activities. This is Nucleotide-binding protein PSHAa2554 from Pseudoalteromonas translucida (strain TAC 125).